The chain runs to 378 residues: Chaperone protein DnaJ 1 (378 aa).

Residues 4–68 (DYYGILGVDR…DKRRIVDMGG (65 aa)) form the J domain. A CR-type zinc finger spans residues 129–211 (GVKKDLTLDT…CAGDGRVRAR (83 aa)). Residues C142, C145, C159, C162, C185, C188, C199, and C202 each contribute to the Zn(2+) site. CXXCXGXG motif repeat units follow at residues 142–149 (CSKCHGSG), 159–166 (CGTCHGSG), 185–192 (CHTCNGTG), and 199–206 (CDECAGDG).

It belongs to the DnaJ family. Homodimer. Requires Zn(2+) as cofactor.

It is found in the cytoplasm. Functionally, participates actively in the response to hyperosmotic and heat shock by preventing the aggregation of stress-denatured proteins and by disaggregating proteins, also in an autonomous, DnaK-independent fashion. Unfolded proteins bind initially to DnaJ; upon interaction with the DnaJ-bound protein, DnaK hydrolyzes its bound ATP, resulting in the formation of a stable complex. GrpE releases ADP from DnaK; ATP binding to DnaK triggers the release of the substrate protein, thus completing the reaction cycle. Several rounds of ATP-dependent interactions between DnaJ, DnaK and GrpE are required for fully efficient folding. Also involved, together with DnaK and GrpE, in the DNA replication of plasmids through activation of initiation proteins. The sequence is that of Chaperone protein DnaJ 1 from Corynebacterium efficiens (strain DSM 44549 / YS-314 / AJ 12310 / JCM 11189 / NBRC 100395).